Reading from the N-terminus, the 278-residue chain is MDLKAYFELIRLKNCLTAGFGALISGLIASNFTFGALFPLILAFLVVFFICGFGNSLNDIYDLKIDRINKPFRPIPSKRISLTDAKVFSYSIMIFGLIISLFNIYCFLMAVLNAVVLQKYAKIYKKNKIIGNMLVAYLTGSVFIFGGIAVGNVNVSLYLFSCAMFSMWAREIIKDYEDIEGDLKEKVSSLPIKYGEKSIYISLGLLLIAIGLSFLPYLTGIFGIYYLLMILICNLMFLAGFFNLLNAPSKKQARKTSKNIKLITNFVLIAFIIGSIFK.

The next 7 membrane-spanning stretches (helical) occupy residues Leu-12 to Phe-32, Phe-34 to Gly-54, Ile-92 to Leu-112, Ile-129 to Ala-149, Ile-199 to Thr-219, Ile-221 to Phe-241, and Ser-257 to Phe-277.

Belongs to the UbiA prenyltransferase family. DGGGP synthase subfamily. Mg(2+) serves as cofactor.

Its subcellular location is the cell membrane. It carries out the reaction sn-3-O-(geranylgeranyl)glycerol 1-phosphate + (2E,6E,10E)-geranylgeranyl diphosphate = 2,3-bis-O-(geranylgeranyl)-sn-glycerol 1-phosphate + diphosphate. It functions in the pathway membrane lipid metabolism; glycerophospholipid metabolism. Functionally, prenyltransferase that catalyzes the transfer of the geranylgeranyl moiety of geranylgeranyl diphosphate (GGPP) to the C2 hydroxyl of (S)-3-O-geranylgeranylglyceryl phosphate (GGGP). This reaction is the second ether-bond-formation step in the biosynthesis of archaeal membrane lipids. In Methanococcus vannielii (strain ATCC 35089 / DSM 1224 / JCM 13029 / OCM 148 / SB), this protein is Digeranylgeranylglyceryl phosphate synthase.